Consider the following 575-residue polypeptide: Acyloxyacyl hydrolase (575 aa).

A signal peptide spans 1 to 23; the sequence is MQSPWKILTVAPLFLLLSLQSSA. A propeptide spanning residues 24 to 34 is cleaved from the precursor; it reads SPANDDQSRPS. One can recognise a Saposin B-type domain in the interval 37-118; that stretch reads NGHTCVGCVL…HTLEFCKQNT (82 aa). The important for enzyme activity, localization to cytoplasmic vesicles, and protein stability stretch occupies residues 38–70; the sequence is GHTCVGCVLVVSVIEQLAQVHNSTVQASMERLC. Intrachain disulfides connect C41-C114, C44-C108, C70-C83, C123-C453, C160-C169, C206-C230, C249-C329, and C376-C459. N59 carries N-linked (GlcNAc...) asparagine glycosylation. The lipopolysaccharide binding stretch occupies residues 173-177; that stretch reads KLAME. Ca(2+)-binding residues include D184, D186, D188, Y190, D205, N207, D208, D210, V213, D223, D227, N229, N231, I233, and E245. N207 carries an N-linked (GlcNAc...) asparagine glycan. The active site involves S263. 2 N-linked (GlcNAc...) asparagine glycosylation sites follow: N409 and N466.

Heterodimer of the large and small subunits; disulfide-linked. It depends on Ca(2+) as a cofactor. Post-translationally, cleaved into a large and a small subunit. In terms of processing, the small subunit is N-glycosylated.

Its subcellular location is the secreted. It is found in the cytoplasmic vesicle. The catalysed reaction is a 3-(acyloxy)acyl derivative of bacterial toxin + H2O = a 3-hydroxyacyl derivative of bacterial toxin + a fatty acid + H(+). Inhibited by EDTA. Functionally, removes the secondary (acyloxyacyl-linked) fatty acyl chains from the lipid A region of bacterial lipopolysaccharides. By breaking down LPS, terminates the host response to bacterial infection and prevents prolonged and damaging inflammatory responses. In peritoneal macrophages, seems to be important for recovery from a state of immune tolerance following infection by Gram-negative bacteria. This is Acyloxyacyl hydrolase from Homo sapiens (Human).